Consider the following 37-residue polypeptide: Potassium channel toxin alpha-KTx 11.2 (37 aa).

3 disulfide bridges follow: Cys8–Cys27, Cys13–Cys33, and Cys17–Cys35.

Belongs to the short scorpion toxin superfamily. Potassium channel inhibitor family. Alpha-KTx 11 subfamily. In terms of tissue distribution, expressed by the venom gland.

It is found in the secreted. Binds and inhibits voltage-sensitive potassium channels. Inhibits the vertebrate potassium channel Kv1.1/KCNA1 with low affinity. The sequence is that of Potassium channel toxin alpha-KTx 11.2 from Parabuthus villosus (Black hairy thick-tailed scorpion).